We begin with the raw amino-acid sequence, 151 residues long: uncharacterized protein (151 aa).

The segment at 123–151 (PAGQNAGTGPAQKLKTDETRCYERRGGSQ) is disordered. Over residues 136-151 (LKTDETRCYERRGGSQ) the composition is skewed to basic and acidic residues.

This is an uncharacterized protein from Triticum aestivum (Wheat).